The sequence spans 458 residues: ATP synthase subunit beta (458 aa).

ATP is bound at residue 148–155 (GGAGVGKT).

This sequence belongs to the ATPase alpha/beta chains family. F-type ATPases have 2 components, CF(1) - the catalytic core - and CF(0) - the membrane proton channel. CF(1) has five subunits: alpha(3), beta(3), gamma(1), delta(1), epsilon(1). CF(0) has three main subunits: a(1), b(2) and c(9-12). The alpha and beta chains form an alternating ring which encloses part of the gamma chain. CF(1) is attached to CF(0) by a central stalk formed by the gamma and epsilon chains, while a peripheral stalk is formed by the delta and b chains.

Its subcellular location is the cell inner membrane. The enzyme catalyses ATP + H2O + 4 H(+)(in) = ADP + phosphate + 5 H(+)(out). Produces ATP from ADP in the presence of a proton gradient across the membrane. The catalytic sites are hosted primarily by the beta subunits. In Shewanella pealeana (strain ATCC 700345 / ANG-SQ1), this protein is ATP synthase subunit beta.